Consider the following 170-residue polypeptide: MTKIGLFYGTQTGNTETIAELIQKEMGGDSVVDMMDISQADVDDFRQYSCLIIGCPTWNVGELQSDWEGFYDQLDEIDFNGKKVAYFGAGDQVGYADNFQDAMGILEEKISGLGGKTVGFWPTAGYDFDESKAVKNGKFVGLALDEDNQPELTELRVKTWVSEIKPILQS.

Residues 4 to 165 (IGLFYGTQTG…RVKTWVSEIK (162 aa)) form the Flavodoxin-like domain.

It belongs to the flavodoxin family. FMN serves as cofactor.

Low-potential electron donor to a number of redox enzymes. The polypeptide is Flavodoxin (isiB) (Synechocystis sp. (strain ATCC 27184 / PCC 6803 / Kazusa)).